A 468-amino-acid polypeptide reads, in one-letter code: Na(+)/H(+) antiporter NhaA (468 aa).

A run of 12 helical transmembrane segments spans residues 28–48 (FLHVEAVSGAVLLAAAAIALV), 79–99 (LHFWINDALMTLFFLAVGMEI), 115–135 (ALPLAAALGGVVAPALIYLAF), 143–163 (AGWAVPTATDIAFAVGVLALL), 173–193 (IFLLALAIIDDIIAVLIIAFF), 196–216 (GGLDYSGFAVAALGIAIVLGL), 219–239 (IGIGTAYAYVLPGAIVWTGLL), 240–260 (MTGAHPTLAGVVLGLMTPVVP), 317–337 (ALHPWVAYAIMPLFALANAGV), 356–376 (VAGALIVGKPAGVIAMSWLLV), 392–412 (IVLIGLLAGVGFTMSIFIAML), and 426–446 (LGVLLGSLATAMLGLAWGAIY).

The protein belongs to the NhaA Na(+)/H(+) (TC 2.A.33) antiporter family.

The protein resides in the cell inner membrane. It catalyses the reaction Na(+)(in) + 2 H(+)(out) = Na(+)(out) + 2 H(+)(in). In terms of biological role, na(+)/H(+) antiporter that extrudes sodium in exchange for external protons. This is Na(+)/H(+) antiporter NhaA from Bordetella petrii (strain ATCC BAA-461 / DSM 12804 / CCUG 43448).